A 371-amino-acid chain; its full sequence is Flagellar P-ring protein 1 (371 aa).

A signal peptide spans 1–19; that stretch reads MRRALLLAALLACAPPAFA.

It belongs to the FlgI family. The basal body constitutes a major portion of the flagellar organelle and consists of four rings (L,P,S, and M) mounted on a central rod.

Its subcellular location is the periplasm. It localises to the bacterial flagellum basal body. Its function is as follows. Assembles around the rod to form the L-ring and probably protects the motor/basal body from shearing forces during rotation. The sequence is that of Flagellar P-ring protein 1 from Cereibacter sphaeroides (strain ATCC 17023 / DSM 158 / JCM 6121 / CCUG 31486 / LMG 2827 / NBRC 12203 / NCIMB 8253 / ATH 2.4.1.) (Rhodobacter sphaeroides).